A 362-amino-acid chain; its full sequence is Chalcone synthase A (362 aa).

The active site involves C168.

This sequence belongs to the thiolase-like superfamily. Chalcone/stilbene synthases family.

The catalysed reaction is (E)-4-coumaroyl-CoA + 3 malonyl-CoA + 3 H(+) = 2',4,4',6'-tetrahydroxychalcone + 3 CO2 + 4 CoA. It functions in the pathway secondary metabolite biosynthesis; flavonoid biosynthesis. The primary product of this enzyme is 4,2',4',6'-tetrahydroxychalcone (also termed naringenin-chalcone or chalcone) which can under specific conditions spontaneously isomerize into naringenin. The protein is Chalcone synthase A (CHSA) of Ipomoea platensis (Morning glory).